Consider the following 145-residue polypeptide: Large ribosomal subunit protein uL14m (145 aa).

The transit peptide at 1–30 (MAALTGLWGSFAHVSRAFSQRCFSTSGSLS) directs the protein to the mitochondrion.

The protein belongs to the universal ribosomal protein uL14 family. Component of the mitochondrial ribosome large subunit (39S) which comprises a 16S rRNA and about 50 distinct proteins. Interacts with MALSU1.

It localises to the mitochondrion. Functionally, may form part of 2 intersubunit bridges in the assembled ribosome. Upon binding to MALSU1, intersubunit bridge formation is blocked, preventing ribosome formation and repressing translation. The polypeptide is Large ribosomal subunit protein uL14m (Mrpl14) (Mus musculus (Mouse)).